The following is a 271-amino-acid chain: HTH-type transcriptional repressor AllR (271 aa).

Residues 21 to 83 form the HTH iclR-type domain; it reads AQALERGIAI…SQLGWWHIGL (63 aa). Positions 43-62 form a DNA-binding region, H-T-H motif; sequence VSDISLNLDLPLSTTFRLLK. Residues 98 to 267 enclose the IclR-ED domain; sequence VLSVAGPFMR…ARDISTALGL (170 aa). Glyoxylate contacts are provided by residues 154–156, aspartate 207, cysteine 217, and 234–236; these read SGA and SIS.

Negative regulator of allantoin and glyoxylate utilization operons. Binds to the gcl promoter and to the allS-allA intergenic region. The protein is HTH-type transcriptional repressor AllR (allR) of Escherichia coli O6:H1 (strain CFT073 / ATCC 700928 / UPEC).